Reading from the N-terminus, the 434-residue chain is Adenylosuccinate synthetase (434 aa).

Residues 22–28 and 50–52 each bind GTP; these read GDEGKGK and GHT. The Proton acceptor role is filled by Asp-23. The Mg(2+) site is built by Asp-23 and Gly-50. IMP is bound by residues 23 to 26, 48 to 51, Thr-139, Arg-153, Gln-234, Thr-249, and Arg-313; these read DEGK and NAGH. His-51 functions as the Proton donor in the catalytic mechanism. Residue 309-315 participates in substrate binding; sequence ATTGRKR. GTP is bound by residues Arg-315, 341–343, and 423–425; these read KLD and SVG.

This sequence belongs to the adenylosuccinate synthetase family. In terms of assembly, homodimer. The cofactor is Mg(2+).

It is found in the cytoplasm. The catalysed reaction is IMP + L-aspartate + GTP = N(6)-(1,2-dicarboxyethyl)-AMP + GDP + phosphate + 2 H(+). The protein operates within purine metabolism; AMP biosynthesis via de novo pathway; AMP from IMP: step 1/2. Plays an important role in the de novo pathway of purine nucleotide biosynthesis. Catalyzes the first committed step in the biosynthesis of AMP from IMP. The protein is Adenylosuccinate synthetase of Chlorobium luteolum (strain DSM 273 / BCRC 81028 / 2530) (Pelodictyon luteolum).